A 473-amino-acid chain; its full sequence is MKTLYSLRRFYPVETLFNGTLALAGRDQETTGFAWWAGNARLINLSGKLLGAHVAHAGLIVFWAGAMNLFEVAHFVPEKPMYEQGLILLPHLATLGWGVGPGGEVVDTFPYFVSGVLHLISSAVLGFGGIYHALLGPETLEESFPFFGYVWKDRNKMTTILGIHLILLGLGAFLLVFKALYFGGVYDTWAPGGGDVRRITNLTLSPSIIFGYLLKSPFGGEGWIVSVDDLEDIIGGHVWLGSICILGGIWHILTKPFAWARRAFVWSGEAYLSYSLGALSVFGFIACCFVWFNNTAYPSEFYGPTGPEASQAQAFTFLVRDQRLGANVGSAQGPTGLGKYLMRSPTGEIIFGGETMRFWDLRAPWLEPLRGPNGLDLSRLKKDIQPWQERRSAEYMTHAPLGSLNSVGGVATEINAVNYVSPRSWLATSHFVLGFFFFVGHLWHAGRARAAAAGFEKGIDRDFEPVLFMTPLN.

Positions 1–14 (MKTLYSLRRFYPVE) are excised as a propeptide. Residue threonine 15 is modified to N-acetylthreonine. Threonine 15 carries the post-translational modification Phosphothreonine. The next 5 membrane-spanning stretches (helical) occupy residues 69–93 (LFEVAHFVPEKPMYEQGLILLPHLA), 134–155 (LLGPETLEESFPFFGYVWKDRN), 178–200 (KALYFGGVYDTWAPGGGDVRRIT), 255–275 (KPFAWARRAFVWSGEAYLSYS), and 291–312 (WFNNTAYPSEFYGPTGPEASQA). Glutamate 367 serves as a coordination point for [CaMn4O5] cluster. A helical membrane pass occupies residues 447-471 (RARAAAAGFEKGIDRDFEPVLFMTP).

It belongs to the PsbB/PsbC family. PsbC subfamily. In terms of assembly, PSII is composed of 1 copy each of membrane proteins PsbA, PsbB, PsbC, PsbD, PsbE, PsbF, PsbH, PsbI, PsbJ, PsbK, PsbL, PsbM, PsbT, PsbX, PsbY, PsbZ, Psb30/Ycf12, at least 3 peripheral proteins of the oxygen-evolving complex and a large number of cofactors. It forms dimeric complexes. The cofactor is Binds multiple chlorophylls and provides some of the ligands for the Ca-4Mn-5O cluster of the oxygen-evolving complex. It may also provide a ligand for a Cl- that is required for oxygen evolution. PSII binds additional chlorophylls, carotenoids and specific lipids..

The protein localises to the plastid. It localises to the chloroplast thylakoid membrane. Functionally, one of the components of the core complex of photosystem II (PSII). It binds chlorophyll and helps catalyze the primary light-induced photochemical processes of PSII. PSII is a light-driven water:plastoquinone oxidoreductase, using light energy to abstract electrons from H(2)O, generating O(2) and a proton gradient subsequently used for ATP formation. The protein is Photosystem II CP43 reaction center protein of Nuphar advena (Common spatterdock).